A 205-amino-acid chain; its full sequence is Thymidylate kinase (205 aa).

ATP is bound at residue 11-18; it reads GPEGSGKT.

This sequence belongs to the thymidylate kinase family.

The enzyme catalyses dTMP + ATP = dTDP + ADP. Its function is as follows. Phosphorylation of dTMP to form dTDP in both de novo and salvage pathways of dTTP synthesis. This Clostridium novyi (strain NT) protein is Thymidylate kinase.